The primary structure comprises 129 residues: Small ribosomal subunit protein uS11 (129 aa).

It belongs to the universal ribosomal protein uS11 family. In terms of assembly, part of the 30S ribosomal subunit. Interacts with proteins S7 and S18. Binds to IF-3.

Located on the platform of the 30S subunit, it bridges several disparate RNA helices of the 16S rRNA. Forms part of the Shine-Dalgarno cleft in the 70S ribosome. This Geobacillus kaustophilus (strain HTA426) protein is Small ribosomal subunit protein uS11.